We begin with the raw amino-acid sequence, 714 residues long: Ribonucleoside-diphosphate reductase 2 subunit alpha (714 aa).

Substrate-binding positions include Thr-161, 177–178, Gly-206, 386–390, and 588–592; these read SC, NLCSE, and PTGSI. Cysteines 178 and 415 form a disulfide. Residue Asn-386 is the Proton acceptor of the active site. Cys-388 acts as the Cysteine radical intermediate in catalysis. The active-site Proton acceptor is the Glu-390.

It belongs to the ribonucleoside diphosphate reductase large chain family. Tetramer of two alpha and two beta subunits.

It catalyses the reaction a 2'-deoxyribonucleoside 5'-diphosphate + [thioredoxin]-disulfide + H2O = a ribonucleoside 5'-diphosphate + [thioredoxin]-dithiol. Its activity is regulated as follows. Under complex allosteric control mediated by deoxynucleoside triphosphates and ATP binding. The type of nucleotide bound at the specificity site determines substrate preference. It seems probable that ATP makes the enzyme reduce CDP and UDP, dGTP favors ADP reduction and dTTP favors GDP reduction. In terms of biological role, provides the precursors necessary for DNA synthesis. Catalyzes the biosynthesis of deoxyribonucleotides from the corresponding ribonucleotides. R1E contains the binding sites for both substrates and allosteric effectors and carries out the actual reduction of the ribonucleotide. This is Ribonucleoside-diphosphate reductase 2 subunit alpha (nrdE) from Escherichia coli (strain K12).